We begin with the raw amino-acid sequence, 780 residues long: ATP-dependent 6-phosphofructokinase, liver type (780 aa).

The residue at position 2 (A2) is an N-acetylalanine. Residues 2 to 390 (ATVDLEKLRM…NWKIYKLLAH (389 aa)) form an N-terminal catalytic PFK domain 1 region. Residues G25, 88 to 89 (RC), and 118 to 121 (GDGS) contribute to the ATP site. D119 is a Mg(2+) binding site. Substrate contacts are provided by residues 164 to 166 (SID), R201, 208 to 210 (MGR), E264, R292, and 298 to 301 (HVQR). D166 acts as the Proton acceptor in catalysis. S377 is modified (phosphoserine). Positions 391-400 (QKVSKEKSNF) are interdomain linker. The interval 401–780 (SLAILNVGAP…RRTLSIDKGF (380 aa)) is C-terminal regulatory PFK domain 2. Residues R470, 527 to 531 (TISNN), R565, 572 to 574 (MGG), and E628 contribute to the beta-D-fructose 2,6-bisphosphate site. An O-linked (GlcNAc) serine glycan is attached at S529. Y640 carries the post-translational modification Phosphotyrosine. Residues R654, 660–663 (HLQQ), and R734 each bind beta-D-fructose 2,6-bisphosphate. Phosphoserine is present on S775.

Belongs to the phosphofructokinase type A (PFKA) family. ATP-dependent PFK group I subfamily. Eukaryotic two domain clade 'E' sub-subfamily. Homo- and heterotetramers. Phosphofructokinase (PFK) enzyme functions as a tetramer composed of different combinations of 3 types of subunits, called PFKM (M), PFKL (L) and PFKP (P). The composition of the PFK tetramer differs according to the tissue type it is present in. The kinetic and regulatory properties of the tetrameric enzyme are dependent on the subunit composition, hence can vary across tissues. It depends on Mg(2+) as a cofactor. In terms of processing, glcNAcylation at Ser-529 by OGT decreases enzyme activity, leading to redirect glucose flux through the oxidative pentose phosphate pathway. Glycosylation is stimulated by both hypoxia and glucose deprivation.

The protein resides in the cytoplasm. The catalysed reaction is beta-D-fructose 6-phosphate + ATP = beta-D-fructose 1,6-bisphosphate + ADP + H(+). It functions in the pathway carbohydrate degradation; glycolysis; D-glyceraldehyde 3-phosphate and glycerone phosphate from D-glucose: step 3/4. With respect to regulation, allosterically activated by ADP, AMP, or fructose 2,6-bisphosphate, and allosterically inhibited by ATP or citrate. GlcNAcylation by OGT overcomes allosteric regulation. In terms of biological role, catalyzes the phosphorylation of D-fructose 6-phosphate to fructose 1,6-bisphosphate by ATP, the first committing step of glycolysis. Negatively regulates the phagocyte oxidative burst in response to bacterial infection by controlling cellular NADPH biosynthesis and NADPH oxidase-derived reactive oxygen species. Upon macrophage activation, drives the metabolic switch toward glycolysis, thus preventing glucose turnover that produces NADPH via pentose phosphate pathway. The protein is ATP-dependent 6-phosphofructokinase, liver type of Mus musculus (Mouse).